The chain runs to 369 residues: Xylene/toluene monooxygenase hydroxylase component XylM (369 aa).

3 consecutive transmembrane segments (helical) span residues 8–28 (LIPV…YWVW), 60–80 (LTQY…VFGV), and 91–111 (LQVA…TLPV). Residues His113, His117, His143, His147, and His148 each coordinate Fe cation. The chain crosses the membrane as a helical span at residues 207–227 (VALLLALPGLVSYLGGPALGL). The Fe cation site is built by His282, His285, and His286. The chain crosses the membrane as a helical span at residues 305 to 325 (MPSLFVCFLLGLIPPLWFALI).

The protein belongs to the fatty acid desaturase type 1 family. AlkB subfamily. In terms of assembly, the xylene/toluene monooxygenase is composed of two subunits: the electron transfer component XylA and the hydroxylase component XylM. Fe(2+) serves as cofactor.

The protein localises to the cell inner membrane. The enzyme catalyses m-xylene + 2 reduced [2Fe-2S]-[ferredoxin] + O2 + 2 H(+) = 3-methylbenzyl alcohol + 2 oxidized [2Fe-2S]-[ferredoxin] + H2O. The catalysed reaction is p-xylene + 2 reduced [2Fe-2S]-[ferredoxin] + O2 + 2 H(+) = 4-methylbenzyl alcohol + 2 oxidized [2Fe-2S]-[ferredoxin] + H2O. It catalyses the reaction toluene + 2 reduced [2Fe-2S]-[ferredoxin] + O2 + 2 H(+) = benzyl alcohol + 2 oxidized [2Fe-2S]-[ferredoxin] + H2O. In terms of biological role, component of a monooxygenase that catalyzes the first step in the degradation of xylenes and toluenes. XylM catalyzes the hydroxylation of the methyl side chain of xylenes and toluenes. The electrons are provided by the electron transfer component XylA. The best substrates are m-xylene and p-xylene, followed by toluene. Shows weak activity with o-xylene. In vitro, is also active with substituted compounds, such as chlorotoluenes. Cannot use benzyl alcohol. The sequence is that of Xylene/toluene monooxygenase hydroxylase component XylM from Pseudomonas putida (Arthrobacter siderocapsulatus).